A 262-amino-acid polypeptide reads, in one-letter code: Pyridoxine 5'-phosphate synthase (262 aa).

N6 provides a ligand contact to 3-amino-2-oxopropyl phosphate. 1-deoxy-D-xylulose 5-phosphate is bound at residue 8–9 (DH). R17 contributes to the 3-amino-2-oxopropyl phosphate binding site. The active-site Proton acceptor is the H43. The 1-deoxy-D-xylulose 5-phosphate site is built by R45 and H50. Catalysis depends on E70, which acts as the Proton acceptor. 1-deoxy-D-xylulose 5-phosphate is bound at residue T102. Residue H215 is the Proton donor of the active site. Residues G216 and 237-238 (GH) each bind 3-amino-2-oxopropyl phosphate.

This sequence belongs to the PNP synthase family. In terms of assembly, homooctamer; tetramer of dimers.

Its subcellular location is the cytoplasm. It catalyses the reaction 3-amino-2-oxopropyl phosphate + 1-deoxy-D-xylulose 5-phosphate = pyridoxine 5'-phosphate + phosphate + 2 H2O + H(+). The protein operates within cofactor biosynthesis; pyridoxine 5'-phosphate biosynthesis; pyridoxine 5'-phosphate from D-erythrose 4-phosphate: step 5/5. Functionally, catalyzes the complicated ring closure reaction between the two acyclic compounds 1-deoxy-D-xylulose-5-phosphate (DXP) and 3-amino-2-oxopropyl phosphate (1-amino-acetone-3-phosphate or AAP) to form pyridoxine 5'-phosphate (PNP) and inorganic phosphate. This chain is Pyridoxine 5'-phosphate synthase, found in Helicobacter pylori (strain ATCC 700392 / 26695) (Campylobacter pylori).